We begin with the raw amino-acid sequence, 231 residues long: Ribonuclease 3 (231 aa).

Residues 7–135 form the RNase III domain; it reads IQAIESKLNF…ILGAVYLDGG (129 aa). Position 48 (Glu-48) interacts with Mg(2+). Residue Asp-52 is part of the active site. Mg(2+) is bound by residues Asn-121 and Glu-124. Glu-124 is an active-site residue. Residues 160-229 enclose the DRBM domain; sequence NPKNRLQQFT…AKQALSTHDN (70 aa).

Belongs to the ribonuclease III family. Homodimer. Mg(2+) serves as cofactor.

The protein localises to the cytoplasm. The enzyme catalyses Endonucleolytic cleavage to 5'-phosphomonoester.. Digests double-stranded RNA. Involved in the processing of primary rRNA transcript to yield the immediate precursors to the large and small rRNAs (23S and 16S). Processes some mRNAs, and tRNAs when they are encoded in the rRNA operon. Processes pre-crRNA and tracrRNA of type II CRISPR loci if present in the organism. The chain is Ribonuclease 3 from Chlamydia trachomatis serovar A (strain ATCC VR-571B / DSM 19440 / HAR-13).